The sequence spans 399 residues: S-adenosylmethionine synthase (399 aa).

His15 serves as a coordination point for ATP. Asp17 contributes to the Mg(2+) binding site. Glu43 is a K(+) binding site. 2 residues coordinate L-methionine: Glu56 and Gln99. Residues 99-109 form a flexible loop region; the sequence is QSPDIAGGVDH. Residues 175 to 177, 242 to 243, Asp251, 257 to 258, Ala274, and Lys278 each bind ATP; these read DAK, RF, and RK. Position 251 (Asp251) interacts with L-methionine. Lys282 is a binding site for L-methionine.

It belongs to the AdoMet synthase family. Homotetramer; dimer of dimers. It depends on Mg(2+) as a cofactor. Requires K(+) as cofactor.

Its subcellular location is the cytoplasm. It catalyses the reaction L-methionine + ATP + H2O = S-adenosyl-L-methionine + phosphate + diphosphate. It functions in the pathway amino-acid biosynthesis; S-adenosyl-L-methionine biosynthesis; S-adenosyl-L-methionine from L-methionine: step 1/1. Catalyzes the formation of S-adenosylmethionine (AdoMet) from methionine and ATP. The overall synthetic reaction is composed of two sequential steps, AdoMet formation and the subsequent tripolyphosphate hydrolysis which occurs prior to release of AdoMet from the enzyme. In Lactobacillus helveticus (strain DPC 4571), this protein is S-adenosylmethionine synthase.